The chain runs to 362 residues: Metacaspase-3 (362 aa).

Catalysis depends on residues histidine 174 and cysteine 230.

This sequence belongs to the peptidase C14B family.

This Arabidopsis thaliana (Mouse-ear cress) protein is Metacaspase-3 (AMC3).